A 477-amino-acid chain; its full sequence is Mitochondrial adenyl nucleotide antiporter SLC25A24 (477 aa).

The tract at residues Met1 to Asp173 is regulatory N-terminal domain. The Mitochondrial intermembrane portion of the chain corresponds to Met1–Gln197. 4 consecutive EF-hand domains span residues Glu19–Pro54, Glu61–Lys85, Asp86–Thr121, and Ile122–Thr157. Ca(2+) is bound by residues Asp32, Asn34, Asp36, Val38, Glu43, Asp68, Asn70, Asp72, Lys74, Glu79, Asp99, Asn101, Asp103, Lys105, Glu110, Asp135, Asp137, Thr139, Thr141, and Glu146. The interval Ile159–His168 is linker region. Residues Ile174–Lys477 are C-terminal transmembrane transporter domain. 3 Solcar repeats span residues Gly192–Leu278, Ile286–His371, and Pro383–Thr471. Residues Leu198 to Leu215 form a helical membrane-spanning segment. The Mitochondrial matrix segment spans residues Asp216–Arg252. Residues Gly253 to Tyr272 form a helical membrane-spanning segment. The Mitochondrial intermembrane segment spans residues Glu273 to Gly295. Residues Ser296 to Met309 form a helical membrane-spanning segment. Topologically, residues Glu310 to Lys345 are mitochondrial matrix. Lys320 carries the post-translational modification N6-acetyllysine; alternate. An N6-succinyllysine; alternate modification is found at Lys320. Lys336 carries the post-translational modification N6-acetyllysine. The helical transmembrane segment at Gly346–Tyr365 threads the bilayer. Topologically, residues Glu366–Leu388 are mitochondrial intermembrane. The chain crosses the membrane as a helical span at residues Leu389–Leu406. The Mitochondrial matrix segment spans residues Ala407 to Arg445. An N6-acetyllysine; alternate modification is found at Lys437. An N6-succinyllysine; alternate modification is found at Lys437. A helical transmembrane segment spans residues Gly446–Tyr465. At Glu466–Lys477 the chain is on the mitochondrial intermembrane side.

It belongs to the mitochondrial carrier (TC 2.A.29) family. In terms of assembly, monomer.

The protein resides in the mitochondrion inner membrane. The catalysed reaction is Mg(2+)(out) + phosphate(in) + ATP(out) = Mg(2+)(in) + phosphate(out) + ATP(in). It catalyses the reaction ADP(out) + phosphate(in) + H(+)(out) = ADP(in) + phosphate(out) + H(+)(in). It carries out the reaction AMP(out) + phosphate(in) = AMP(in) + phosphate(out). The enzyme catalyses phosphate(in) + ATP(out) + 2 H(+)(out) = phosphate(out) + ATP(in) + 2 H(+)(in). The catalysed reaction is dADP(in) + ADP(out) = dADP(out) + ADP(in). It catalyses the reaction Mg(2+)(in) + ADP(out) + ATP(in) + H(+)(out) = Mg(2+)(out) + ADP(in) + ATP(out) + H(+)(in). It carries out the reaction ADP(out) + diphosphate(in) = ADP(in) + diphosphate(out). The enzyme catalyses dAMP(in) + ADP(out) + H(+)(out) = dAMP(out) + ADP(in) + H(+)(in). The catalysed reaction is 3'-AMP(in) + ADP(out) + H(+)(out) = 3'-AMP(out) + ADP(in) + H(+)(in). It catalyses the reaction dAMP(out) + phosphate(in) = dAMP(in) + phosphate(out). It carries out the reaction 3'-AMP(out) + phosphate(in) = 3'-AMP(in) + phosphate(out). The enzyme catalyses dADP(out) + phosphate(in) + H(+)(out) = dADP(in) + phosphate(out) + H(+)(in). With respect to regulation, activated by an increase in cytosolic calcium levels that induce a conformational change of the N-terminal regulatory domain, uncapping the channel and allowing transport. Inhibited by bathophenanthroline, mersalyl, p-hydroxymercuribenzoate, bromcresol purple and tannic acid. Functionally, electroneutral antiporter that mediates the transport of adenyl nucleotides through the inner mitochondrial membrane. Originally identified as an ATP-magnesium/inorganic phosphate antiporter, it also acts as a broad specificity adenyl nucleotide antiporter. By regulating the mitochondrial matrix adenyl nucleotide pool could adapt to changing cellular energetic demands and indirectly regulate adenyl nucleotide-dependent metabolic pathways. In vitro, a low activity is also observed with guanyl and pyrimidine nucleotides. May play a role in protecting cells against oxidative stress-induced cell death, by buffering calcium levels in the mitochondrial matrix through the formation of calcium-phosphate precipitates. In Bos taurus (Bovine), this protein is Mitochondrial adenyl nucleotide antiporter SLC25A24 (SLC25A24).